Reading from the N-terminus, the 627-residue chain is Glucokinase regulatory protein (627 aa).

2 consecutive SIS domains span residues 90 to 286 (VQEV…QGVV) and 320 to 499 (VGIS…LLGK). Beta-D-fructose 1-phosphate is bound by residues 109–110 (TS), Glu153, and 179–181 (SVG). Position 109–110 (109–110 (TS)) interacts with beta-D-fructose 6-phosphate. A beta-D-fructose 6-phosphate-binding site is contributed by 179–181 (SVG). An important for interaction with GCK region spans residues 199–200 (AV). Glu348 is a binding site for beta-D-fructose 1-phosphate. The segment at 463 to 465 (LLF) is essential for interaction with GCK. Lys514 serves as a coordination point for beta-D-fructose 1-phosphate. Lys514 lines the beta-D-fructose 6-phosphate pocket.

Belongs to the GCKR family. Interacts (fructose 6-phosphate bound form) with GCK. As to expression, detected in liver (at protein level). Not detected in muscle, brain, heart, testis, intestine or spleen.

Its subcellular location is the cytoplasm. The protein resides in the nucleus. It is found in the mitochondrion. Functionally, regulates glucokinase (GCK) by forming an inactive complex with this enzyme. Acts by promoting GCK recruitment to the nucleus, possibly to provide a reserve of GCK that can be quickly released in the cytoplasm after a meal. The affinity of GCKR for GCK is modulated by fructose metabolites: GCKR with bound fructose 6-phosphate has increased affinity for GCK, while GCKR with bound fructose 1-phosphate has strongly decreased affinity for GCK and does not inhibit GCK activity. The polypeptide is Glucokinase regulatory protein (Rattus norvegicus (Rat)).